Here is a 401-residue protein sequence, read N- to C-terminus: MTTIGTPLSPSATKVMLLGSGELGKEVLIALQRLGVETIAVDRYDNAPGQQVAHHARTIAMSDPEQLKALIEAEKPQLVVPEIEAIATPMLESLEAAGVVRVIPTARAARLTMDREGIRRLAAETLGLPTSPYKFCDSLEELQTAIDGGIGYPCVVKPVMSSSGKGQSKIDGPEGVKAAWDYAMAGGRVSHGRVIVEGFIDFDYEITLLTVRALGADGKVETQFCTPIGHVQVSGDYVESWQPHPMHPAALQTAQHIARAVTSDLGGQGLFGVELFVKGEQVWFSEVSPRPHDTGMVTMATQWQNEFELHARAILGLPVSTALKSPGASAVIYGGVDAQGVVFDGVDAALRVPQTEVRLFGKPESFAKRRMGVALAYADDVDTARQRAKEAAACVKPRVAG.

N(1)-(5-phospho-beta-D-ribosyl)glycinamide is bound by residues 22–23 (EL) and E82. ATP contacts are provided by residues R115, K157, 162 to 167 (SSGKGQ), 197 to 200 (EGFI), and E205. The 196-residue stretch at 120–315 (RLAAETLGLP…EFELHARAIL (196 aa)) folds into the ATP-grasp domain. Mg(2+) is bound by residues E274 and E286. N(1)-(5-phospho-beta-D-ribosyl)glycinamide is bound by residues D293, K362, and 369–370 (RR).

It belongs to the PurK/PurT family. In terms of assembly, homodimer.

It carries out the reaction N(1)-(5-phospho-beta-D-ribosyl)glycinamide + formate + ATP = N(2)-formyl-N(1)-(5-phospho-beta-D-ribosyl)glycinamide + ADP + phosphate + H(+). It functions in the pathway purine metabolism; IMP biosynthesis via de novo pathway; N(2)-formyl-N(1)-(5-phospho-D-ribosyl)glycinamide from N(1)-(5-phospho-D-ribosyl)glycinamide (formate route): step 1/1. Functionally, involved in the de novo purine biosynthesis. Catalyzes the transfer of formate to 5-phospho-ribosyl-glycinamide (GAR), producing 5-phospho-ribosyl-N-formylglycinamide (FGAR). Formate is provided by PurU via hydrolysis of 10-formyl-tetrahydrofolate. This chain is Formate-dependent phosphoribosylglycinamide formyltransferase, found in Cupriavidus pinatubonensis (strain JMP 134 / LMG 1197) (Cupriavidus necator (strain JMP 134)).